The primary structure comprises 343 residues: Vancomycin C-type resistance protein VanC1 (343 aa).

Positions 134 to 336 (HQLADTMGIA…YEILVEQLIA (203 aa)) constitute an ATP-grasp domain. 164–219 (IQDHGFPIFIKPNEAGSSKGITKVTDKTALQSALTTAFAYGSTVLIQKAIAGIEIG) contributes to the ATP binding site. Mg(2+)-binding residues include D290, E303, and N305. Residues D290, E303, and N305 each contribute to the Mn(2+) site.

This sequence belongs to the D-alanine--D-alanine ligase family. Mg(2+) serves as cofactor. Mn(2+) is required as a cofactor.

The protein resides in the cell membrane. It carries out the reaction D-serine + D-alanine + ATP = D-alanyl-D-serine + ADP + phosphate + H(+). D-alanine--D-alanine ligase of altered specificity, which catalyzes synthesis of D-Ala-D-Ser; produces a peptidoglycan which does not terminate in D-alanine but in D-serine, thus probably reducing affinity for vancomycin. Together with VanT and VanXYC, required for vancomycin resistance in E.gallinarum strain BM4174. The polypeptide is Vancomycin C-type resistance protein VanC1 (Enterococcus gallinarum).